A 238-amino-acid polypeptide reads, in one-letter code: uncharacterized protein (238 aa).

To M.thermoautotrophicum MTH564.

This is an uncharacterized protein from Methanocaldococcus jannaschii (strain ATCC 43067 / DSM 2661 / JAL-1 / JCM 10045 / NBRC 100440) (Methanococcus jannaschii).